We begin with the raw amino-acid sequence, 318 residues long: NADH-ubiquinone oxidoreductase chain 1 (318 aa).

Helical transmembrane passes span 2-22 (FLTNISCLIIPILLAVAFLTL), 36-56 (GPNIVGPYGLLQPIADAIKLF), 69-89 (LLFTIAPTLALSLALTLWIPL), 100-120 (LGMLFILAMSSLAVYSILWSG), 130-152 (IGALRAVAQTISYEVTLAIILLH), 171-191 (HIWLIIPSWPLTMMWFISTLA), 217-237 (AGPFALFFLAEYANIMMMNAL), 254-273 (LYSTNFMLKTTMLTISFLWI), and 294-314 (LPLTLALCMWHTSLLISLTSI).

This sequence belongs to the complex I subunit 1 family.

The protein resides in the mitochondrion inner membrane. It carries out the reaction a ubiquinone + NADH + 5 H(+)(in) = a ubiquinol + NAD(+) + 4 H(+)(out). Functionally, core subunit of the mitochondrial membrane respiratory chain NADH dehydrogenase (Complex I) that is believed to belong to the minimal assembly required for catalysis. Complex I functions in the transfer of electrons from NADH to the respiratory chain. The immediate electron acceptor for the enzyme is believed to be ubiquinone. The chain is NADH-ubiquinone oxidoreductase chain 1 (MT-ND1) from Cyclopes didactylus (Silky anteater).